Here is a 224-residue protein sequence, read N- to C-terminus: Heme response regulator HssR (224 aa).

One can recognise a Response regulatory domain in the interval 3–116 (QCLVVDDDPR…ELIFRIRAVL (114 aa)). Asp52 is subject to 4-aspartylphosphate. A DNA-binding region (ompR/PhoB-type) is located at residues 124 to 222 (NSEMTIGNLT…VRGQGYKVEN (99 aa)).

Phosphorylated by HssS.

The protein localises to the cytoplasm. In terms of biological role, member of the two-component regulatory system HssS/HssR involved in intracellular heme homeostasis and tempering of staphylococcal virulence. Phosphorylated HssR binds to a direct repeat sequence within hrtAB promoter and activates the expression of hrtAB, an efflux pump, in response to extracellular heme, hemin, hemoglobin or blood. The polypeptide is Heme response regulator HssR (hssR) (Staphylococcus aureus (strain COL)).